The primary structure comprises 354 residues: Guanine nucleotide-binding protein alpha-3 subunit (354 aa).

Glycine 2 carries N-myristoyl glycine lipidation. The S-palmitoyl cysteine moiety is linked to residue cysteine 4. Residues 33-354 (KECKILLLGS…TNALKDSGIL (322 aa)) enclose the G-alpha domain. The G1 motif stretch occupies residues 36–49 (KILLLGSGESGKST). GTP is bound by residues 41–48 (GSGESGKS), 177–183 (LRARSKT), 202–206 (DVGGQ), 271–274 (NKID), and alanine 326. Positions 48 and 183 each coordinate Mg(2+). Positions 175 to 183 (DVLRARSKT) are G2 motif. The tract at residues 198–207 (IHLFDVGGQR) is G3 motif. Positions 267–274 (ILFLNKID) are G4 motif. A G5 motif region spans residues 324–329 (TQATDT).

Belongs to the G-alpha family. G proteins are composed of 3 units; alpha, beta and gamma. The alpha chain contains the guanine nucleotide binding site.

Functionally, guanine nucleotide-binding proteins (G proteins) are involved as modulators or transducers in various transmembrane signaling systems. This subunit is involved in cAMP regulation and morphogenesis. It is essential for dimorphic switching in haploid cells. The chain is Guanine nucleotide-binding protein alpha-3 subunit (FIL1) from Ustilago hordei (Barley covered smut fungus).